Here is a 673-residue protein sequence, read N- to C-terminus: uncharacterized protein (673 aa).

The Cytoplasmic portion of the chain corresponds to 1–208 (MSTHSNDYFS…STGQLELPPD (208 aa)). Phosphoserine occurs at positions 57, 112, and 172. The chain crosses the membrane as a helical span at residues 209–229 (GGYGWVVTFCVFLTMFSTWGC). N-linked (GlcNAc...) asparagine glycosylation occurs at N230. The Lumenal segment spans residues 230 to 255 (NASFGVDLAYYLNHDTYPGASKYDYA). Residues 256-276 (LIAGLTVFLGQLLSPLVMALM) form a helical membrane-spanning segment. Residue R277 is a topological domain, cytoplasmic. Residues 278–298 (IIGLRTTMLFGDAVMLAAYLL) traverse the membrane as a helical segment. The Lumenal segment spans residues 299–315 (ASFTTKLWQLYVTQGFM). Residues 316-336 (VGCSISLIFVPATTVLPGWFL) traverse the membrane as a helical segment. The Cytoplasmic portion of the chain corresponds to 337–339 (KKR). The helical transmembrane segment at 340-360 (AVAMGVSLLGTGAGGVVYGLA) threads the bilayer. The Lumenal portion of the chain corresponds to 361 to 372 (TNKMLSDFGNTR). Residues 373-393 (WCLRIIGISCSISVLVAIALL) form a helical membrane-spanning segment. At 394–426 (KERNPTPAIGLKSPRAMFEQLKAMFSLKVITKP) the chain is on the cytoplasmic side. The helical transmembrane segment at 427 to 447 (FVVLIALWFMFALFAYNMMVF) threads the bilayer. Topologically, residues 448-504 (TLSSYAISKGLSSHDASTLTAILNGSQSIGRPLMGLAGDKFGRANVTIVLTTLLTIY) are lumenal. 2 N-linked (GlcNAc...) asparagine glycosylation sites follow: N471 and N492. Residues 505–525 (MFAFWIPAHTFVQLIFFSILV) traverse the membrane as a helical segment. The Cytoplasmic portion of the chain corresponds to 526–549 (GSCVGVANVMNTVLIADMVKPEEF). The helical transmembrane segment at 550-570 (LPAWAFVNYCGAPFLLVCEVI) threads the bilayer. The Lumenal portion of the chain corresponds to 571 to 584 (AQALTVEKDKSNPY). Residues 585 to 605 (LHAQIFCGCCFIAALILISIL) traverse the membrane as a helical segment. Topologically, residues 606–673 (REYSIRMKLT…FLRMVYPMKV (68 aa)) are cytoplasmic. At S637 the chain carries Phosphoserine.

The protein belongs to the major facilitator superfamily. Monocarboxylate porter (TC 2.A.1.13) family.

The protein resides in the endoplasmic reticulum membrane. This is an uncharacterized protein from Saccharomyces cerevisiae (strain ATCC 204508 / S288c) (Baker's yeast).